We begin with the raw amino-acid sequence, 334 residues long: Holliday junction branch migration complex subunit RuvB (334 aa).

The segment at 1–182 (MDKRMVDQEF…FGVHLRLEYY (182 aa)) is large ATPase domain (RuvB-L). Residues L21, R22, G63, K66, T67, T68, 129 to 131 (EDF), R172, Y182, and R219 each bind ATP. T67 contacts Mg(2+). Residues 183–253 (NENDLKEIIT…TTKRALQLLQ (71 aa)) form a small ATPAse domain (RuvB-S) region. Residues 256–334 (QHGLDYIDHK…HFNTTNEKRE (79 aa)) form a head domain (RuvB-H) region. The DNA site is built by R292, R311, and R316.

It belongs to the RuvB family. In terms of assembly, homohexamer. Forms an RuvA(8)-RuvB(12)-Holliday junction (HJ) complex. HJ DNA is sandwiched between 2 RuvA tetramers; dsDNA enters through RuvA and exits via RuvB. An RuvB hexamer assembles on each DNA strand where it exits the tetramer. Each RuvB hexamer is contacted by two RuvA subunits (via domain III) on 2 adjacent RuvB subunits; this complex drives branch migration. In the full resolvosome a probable DNA-RuvA(4)-RuvB(12)-RuvC(2) complex forms which resolves the HJ.

It localises to the cytoplasm. It carries out the reaction ATP + H2O = ADP + phosphate + H(+). Its function is as follows. The RuvA-RuvB-RuvC complex processes Holliday junction (HJ) DNA during genetic recombination and DNA repair, while the RuvA-RuvB complex plays an important role in the rescue of blocked DNA replication forks via replication fork reversal (RFR). RuvA specifically binds to HJ cruciform DNA, conferring on it an open structure. The RuvB hexamer acts as an ATP-dependent pump, pulling dsDNA into and through the RuvAB complex. RuvB forms 2 homohexamers on either side of HJ DNA bound by 1 or 2 RuvA tetramers; 4 subunits per hexamer contact DNA at a time. Coordinated motions by a converter formed by DNA-disengaged RuvB subunits stimulates ATP hydrolysis and nucleotide exchange. Immobilization of the converter enables RuvB to convert the ATP-contained energy into a lever motion, pulling 2 nucleotides of DNA out of the RuvA tetramer per ATP hydrolyzed, thus driving DNA branch migration. The RuvB motors rotate together with the DNA substrate, which together with the progressing nucleotide cycle form the mechanistic basis for DNA recombination by continuous HJ branch migration. Branch migration allows RuvC to scan DNA until it finds its consensus sequence, where it cleaves and resolves cruciform DNA. The polypeptide is Holliday junction branch migration complex subunit RuvB (Staphylococcus epidermidis (strain ATCC 35984 / DSM 28319 / BCRC 17069 / CCUG 31568 / BM 3577 / RP62A)).